A 226-amino-acid polypeptide reads, in one-letter code: Putative integrase V10 (226 aa).

Residues Arg97, His174, and Arg177 contribute to the active site. Tyr210 functions as the O-(3'-phospho-DNA)-tyrosine intermediate in the catalytic mechanism.

It belongs to the 'phage' integrase family.

May catalyze site-specific integration of viral genome into host or helper virus DNA. The polypeptide is Putative integrase V10 (Acanthamoeba polyphaga (Amoeba)).